The primary structure comprises 774 residues: Probable ubiquitin-like-specific protease 2A (774 aa).

The interval 118 to 141 is disordered; the sequence is SSLSENDEVSTGEATNPASDPHEV. Residues His-400, Asp-430, and Cys-485 contribute to the active site. Residues 548 to 568 are disordered; it reads ILPANSKSEPPHCGVSNRNDQ.

This sequence belongs to the peptidase C48 family.

Protease that catalyzes two essential functions in the SUMO pathway: processing of full-length SUMOs to their mature forms and deconjugation of SUMO from targeted proteins. This is Probable ubiquitin-like-specific protease 2A (ULP2A) from Arabidopsis thaliana (Mouse-ear cress).